Here is a 158-residue protein sequence, read N- to C-terminus: Protein Smg homolog (158 aa).

Belongs to the Smg family.

In Vibrio cholerae serotype O1 (strain ATCC 39315 / El Tor Inaba N16961), this protein is Protein Smg homolog.